The following is a 672-amino-acid chain: Transmembrane 9 superfamily member 2 (672 aa).

The N-terminal stretch at 1–18 (MKRGVWLLIYCYATLTKG) is a signal peptide. At 19–307 (FSLPGLSPTT…DKYLHIYDPQ (289 aa)) the chain is on the extracellular side. The chain crosses the membrane as a helical span at residues 308–328 (IQWFSLINFSVIVILLSSVVM). Topologically, residues 329–383 (HSLLRALKSDLARYNELNLDNEFHEDSGWKLGHGDVFRTPSKSMLLSILVGSGMQ) are cytoplasmic. The helical transmembrane segment at 384 to 404 (LFLMVMCSIFFAAVGLVSPVS) threads the bilayer. Residues 405-410 (RGSLPT) lie on the Extracellular side of the membrane. The chain crosses the membrane as a helical span at residues 411 to 431 (VMFVLYALFGFVGSYASMGVY). At 432 to 447 (KFFRGPYWKANMILTP) the chain is on the cytoplasmic side. A helical transmembrane segment spans residues 448 to 468 (ILLPGAIFLLIVIMNFFLLFA). Topologically, residues 469–479 (HSSGVIPARSL) are extracellular. A helical membrane pass occupies residues 480-500 (FFIILLWFLVSVPLSFAGSIV). Over 501–532 (AHKQCNWDEHPTKTNQIARQIPYQPWYLRTAQ) the chain is Cytoplasmic. Residues 533 to 553 (ATLIAGIFSFGSIAVELYFIY) traverse the membrane as a helical segment. Topologically, residues 554-565 (SSLWFNKIFYMF) are extracellular. The helical transmembrane segment at 566–586 (GFLLFSFLLLTLTTSLVTILI) threads the bilayer. Residues 587-601 (TYYSLCLENWLWQWR) are Cytoplasmic-facing. The chain crosses the membrane as a helical span at residues 602–622 (SFIIGGLGCSIYTFIHSILFT). Residues 623–628 (KFKLGG) lie on the Extracellular side of the membrane. Residues 629–649 (VITVVLYLGYSLIISALCCVV) traverse the membrane as a helical segment. Residues 650-672 (TGAIGFFSSMFFIRKIYSAIKVE) lie on the Cytoplasmic side of the membrane.

This sequence belongs to the nonaspanin (TM9SF) (TC 9.A.2) family.

It localises to the vacuole membrane. Functionally, with EMP70 and TMN3, plays a critical role in the late stages of a nutrient-controlled pathway notably regulating FLO11 gene expression. Acts downstream of RAS2 and TOR. Essential for cell adhesion and filamentous growth. May play a role as effector of cellular copper homeostasis. The polypeptide is Transmembrane 9 superfamily member 2 (TMN2) (Saccharomyces cerevisiae (strain ATCC 204508 / S288c) (Baker's yeast)).